The sequence spans 270 residues: Release factor glutamine methyltransferase (270 aa).

S-adenosyl-L-methionine contacts are provided by residues 113–117 (GTGSG), Asp-136, and Asn-177. 177–180 (NPPY) contributes to the substrate binding site.

Belongs to the protein N5-glutamine methyltransferase family. PrmC subfamily.

The catalysed reaction is L-glutaminyl-[peptide chain release factor] + S-adenosyl-L-methionine = N(5)-methyl-L-glutaminyl-[peptide chain release factor] + S-adenosyl-L-homocysteine + H(+). Methylates the class 1 translation termination release factors RF1/PrfA and RF2/PrfB on the glutamine residue of the universally conserved GGQ motif. This Lactococcus lactis subsp. lactis (strain IL1403) (Streptococcus lactis) protein is Release factor glutamine methyltransferase.